The chain runs to 477 residues: Glutamyl-tRNA reductase (477 aa).

Residues threonine 49–arginine 52, serine 109, glutamate 114–glutamine 116, and glutamine 120 each bind substrate. Cysteine 50 acts as the Nucleophile in catalysis. Position 189–194 (glycine 189–glycine 194) interacts with NADP(+).

Belongs to the glutamyl-tRNA reductase family. Homodimer.

It catalyses the reaction (S)-4-amino-5-oxopentanoate + tRNA(Glu) + NADP(+) = L-glutamyl-tRNA(Glu) + NADPH + H(+). It participates in porphyrin-containing compound metabolism; protoporphyrin-IX biosynthesis; 5-aminolevulinate from L-glutamyl-tRNA(Glu): step 1/2. Catalyzes the NADPH-dependent reduction of glutamyl-tRNA(Glu) to glutamate 1-semialdehyde (GSA). The chain is Glutamyl-tRNA reductase from Nocardia farcinica (strain IFM 10152).